A 20-amino-acid chain; its full sequence is Hongotoxin-5 (20 aa).

It belongs to the short scorpion toxin superfamily. Potassium channel inhibitor family. Alpha-KTx 02 subfamily. In terms of tissue distribution, expressed by the venom gland.

Its subcellular location is the secreted. Potent selective inhibitor of Kv1/KCNA voltage-gated potassium channels. This chain is Hongotoxin-5, found in Centruroides limbatus (Bark scorpion).